The primary structure comprises 895 residues: MEVQLGLGRVYPRPPSKTYRGAFQNLFQSVREVIQNPGPRHPEAASAAPPGASLQQQQQQQQETSPRQQQQQQQGEDGSPQAHRRGPTGYLVLDEEQQPSQPQSAPECHPERGCVPEPGAAVAAGKGLPQQLPAPPDEDDSAAPSTLSLLGPTFPGLSSCSADLKDILSEASTMQLLQQQQQEAVSEGSSSGRAREASGAPTSSKDNYLEGTSTISDSAKELCKAVSVSMGLGVEALEHLSPGEQLRGDCMYAPVLGVPPAVRPTPCAPLAECKGSLLDDSAGKSTEDTAEYSPFKGGYTKGLEGESLGCSGSAAAGSSGTLELPSTLSLYKSGALDEAAAYQSRDYYNFPLALAGPPPPPPPPHPHARIKLENPLDYGSAWAAAAAQCRYGDLASLHGAGAAGPGSGSPSAAASSSWHTLFTAEEGQLYGPCGGGGGGGGGGGGGAGEAGAVAPYGYTRPPQGLAGQEGDFTAPDVWYPGGMVSRVPYPSPTCVKSEMGPWMDSYSGPYGDMRLETARDHVLPIDYYFPPQKTCLICGDEASGCHYGALTCGSCKVFFKRAAEGKQKYLCASRNDCTIDKFRRKNCPSCRLRKCYEAGMTLGARKLKKLGNLKLQEEGEASSTTSPTEETAQKLTVSHIEGYECQPIFLNVLEAIEPGVVCAGHDNNQPDSFAALLSSLNELGERQLVHVVKWAKALPGFRNLHVDDQMAVIQYSWMGLMVFAMGWRSFTNVNSRMLYFAPDLVFNEYRMHKSRMYSQCVRMRHLSQEFGWLQITPQEFLCMKALLLFSIIPVDGLKNQKFFDELRMNYIKELDRIIACKRKNPTSCSRRFYQLTKLLDSVQPIARELHQFTFDLLIKSHMVSVDFPEMMAEIISVQVPKILSGKVKPIYFHTQ.

The tract at residues Met-1–Lys-533 is modulating. Residues Met-1–Ala-562 form an interaction with ZNF318 region. 2 disordered regions span residues Val-33 to Leu-150 and Gln-178 to Gly-211. 2 stretches are compositionally biased toward low complexity: residues Ala-44–Gln-81 and Gln-178–Ala-200. At Ser-65 the chain carries Phosphoserine; by CDK9. Ser-79 carries the post-translational modification Phosphoserine. A compositionally biased stretch (polar residues) spans Pro-201 to Gly-211. Tyr-208 carries the post-translational modification Phosphotyrosine; by CSK. At Ser-241 the chain carries Phosphoserine. Phosphotyrosine; by CSK and TNK2 is present on Tyr-252. 4 positions are modified to phosphotyrosine; by CSK: Tyr-292, Tyr-331, Tyr-342, and Tyr-347. A Phosphotyrosine; by CSK and TNK2 modification is found at Tyr-348. Lys-371 participates in a covalent cross-link: Glycyl lysine isopeptide (Lys-Gly) (interchain with G-Cter in SUMO). Tyr-378 carries the phosphotyrosine; by CSK modification. Lys-496 participates in a covalent cross-link: Glycyl lysine isopeptide (Lys-Gly) (interchain with G-Cter in SUMO). Phosphotyrosine; by CSK is present on residues Tyr-510 and Tyr-527. The segment at Tyr-527–Thr-894 is interaction with LPXN. The segment at residues Thr-534–Leu-607 is a DNA-binding region (nuclear receptor). NR C4-type zinc fingers lie at residues Cys-535 to Cys-555 and Cys-571 to Cys-595. Residues Tyr-547–Val-637 form an interaction with HIPK3 region. Residues Gln-567–Thr-894 form an interaction with CCAR1 region. Residues Met-600–Thr-894 are interaction with KAT7. Ser-626 carries the phosphoserine; by STK4/MST1 modification. The region spanning Glu-644–Ile-875 is the NR LBD domain. Positions 681 and 728 each coordinate 17beta-hydroxy-5alpha-androstan-3-one. Glycyl lysine isopeptide (Lys-Gly) (interchain with G-Cter in ubiquitin) cross-links involve residues Lys-821 and Lys-823. Residue Thr-853 coordinates 17beta-hydroxy-5alpha-androstan-3-one. Tyr-891 bears the Phosphotyrosine; by CSK mark.

It belongs to the nuclear hormone receptor family. NR3 subfamily. In terms of assembly, binds DNA as a homodimer. Part of a ternary complex containing AR, EFCAB6/DJBP and PARK7. Interacts with HIPK3 and NR0B2 in the presence of androgen. The ligand binding domain interacts with KAT7/HBO1 in the presence of dihydrotestosterone. Interacts with EFCAB6/DJBP, PQBP1, RANBP9, RBAK, SPDEF, SRA1, TGFB1I1 and RREB1. Interacts with ZMIZ1/ZIMP10 and ZMIZ2/ZMIP7 which both enhance its transactivation activity. Interacts with SLC30A9 and RAD54L2/ARIP4. Interacts with MACROD1 (via macro domain). Interacts via the ligand-binding domain with LXXLL and FXXLF motifs from NCOA1, NCOA2, NCOA3 and MAGEA11. Interacts (via nuclear receptor DNA binding domain and nuclear receptor ligand binding domain) with NCOA4. The AR N-terminal poly-Gln region binds Ran resulting in enhancement of AR-mediated transactivation. Ran-binding decreases as the poly-Gln length increases. Interacts with HIP1 (via coiled coil domain). Interacts (via ligand-binding domain) with TRIM68. Interacts with TNK2. Interacts with USP26. Interacts with RNF6. Interacts (regulated by RNF6 probably through polyubiquitination) with RNF14; regulates AR transcriptional activity. Interacts with PRMT2 and TRIM24. Interacts with RACK1. Interacts with RANBP10; this interaction enhances dihydrotestosterone-induced AR transcriptional activity. Interacts with PRPF6 in a hormone-independent way; this interaction enhances dihydrotestosterone-induced AR transcriptional activity. Interacts with STK4/MST1. Interacts with ZIPK/DAPK3. Interacts with LPXN. Interacts with MAK. Part of a complex containing AR, MAK and NCOA3. Interacts with CRY1. Interacts with CCAR1 and GATA2. Interacts with ZNF318. Interacts with BUD31. Interacts with ARID4A. Interacts with ARID4B. Interacts (via NR LBD domain) with ZBTB7A; the interaction is direct and androgen-dependent. Interacts with NCOR1. Interacts with NCOR2. Interacts with CRY2 in a ligand-dependent manner. Post-translationally, phosphorylated in prostate cancer cells in response to several growth factors including EGF. Phosphorylation is induced by c-Src kinase (CSK). Tyr-510 is one of the major phosphorylation sites and an increase in phosphorylation and Src kinase activity is associated with prostate cancer progression. Phosphorylation by TNK2 enhances the DNA-binding and transcriptional activity. Phosphorylation at Ser-65 by CDK9 regulates AR promoter selectivity and cell growth. In terms of processing, sumoylated on Lys-371 (major) and Lys-496. Ubiquitinated. Deubiquitinated by USP26. 'Lys-6' and 'Lys-27'-linked polyubiquitination by RNF6 modulates AR transcriptional activity and specificity. Palmitoylated by ZDHHC7 and ZDHHC21. Palmitoylation is required for plasma membrane targeting and for rapid intracellular signaling via ERK and AKT kinases and cAMP generation.

The protein localises to the nucleus. The protein resides in the cytoplasm. Its function is as follows. Steroid hormone receptors are ligand-activated transcription factors that regulate eukaryotic gene expression and affect cellular proliferation and differentiation in target tissues. Transcription factor activity is modulated by bound coactivator and corepressor proteins like ZBTB7A that recruits NCOR1 and NCOR2 to the androgen response elements/ARE on target genes, negatively regulating androgen receptor signaling and androgen-induced cell proliferation. Transcription activation is also down-regulated by NR0B2. Activated, but not phosphorylated, by HIPK3 and ZIPK/DAPK3. This chain is Androgen receptor (AR), found in Macaca mulatta (Rhesus macaque).